Reading from the N-terminus, the 257-residue chain is Global transcriptional regulator CodY (257 aa).

The segment at 1 to 155 (MSLLSKTREL…AATVIGMEIL (155 aa)) is GAF domain. The segment at residues 203–222 (ASKVADRVGITRSVIVNALR) is a DNA-binding region (H-T-H motif).

Belongs to the CodY family.

The protein resides in the cytoplasm. Its function is as follows. DNA-binding global transcriptional regulator which is involved in the adaptive response to starvation and acts by directly or indirectly controlling the expression of numerous genes in response to nutrient availability. During rapid exponential growth, CodY is highly active and represses genes whose products allow adaptation to nutrient depletion. The sequence is that of Global transcriptional regulator CodY from Staphylococcus saprophyticus subsp. saprophyticus (strain ATCC 15305 / DSM 20229 / NCIMB 8711 / NCTC 7292 / S-41).